The following is a 195-amino-acid chain: UPF0215 protein TSIB_1161 (195 aa).

Belongs to the UPF0215 family.

The chain is UPF0215 protein TSIB_1161 from Thermococcus sibiricus (strain DSM 12597 / MM 739).